We begin with the raw amino-acid sequence, 339 residues long: Serine racemase (339 aa).

A Mg(2+)-binding site is contributed by glutamate 13. Serine 31, serine 32, isoleucine 33, lysine 51, and threonine 52 together coordinate ATP. Catalysis depends on lysine 56, which acts as the Proton acceptor. Position 56 is an N6-(pyridoxal phosphate)lysine (lysine 56). Position 69 (proline 69) interacts with Ca(2+). Threonine 71 bears the Phosphothreonine mark. Threonine 81 is a Ca(2+) binding site. Residue serine 84 is the Proton acceptor of the active site. Residue asparagine 86 participates in pyridoxal 5'-phosphate binding. An ATP-binding site is contributed by glutamine 89. An S-nitrosocysteine modification is found at cysteine 113. Tyrosine 121 provides a ligand contact to ATP. Position 154 (asparagine 154) interacts with pyridoxal 5'-phosphate. Residue aspartate 178 participates in Mg(2+) binding. Residues glycine 185, glycine 186, glycine 187, glycine 188, and methionine 189 each coordinate pyridoxal 5'-phosphate. Positions 210, 214, 216, and 247 each coordinate Mg(2+). Residues glutamate 210, alanine 214, aspartate 216, and asparagine 247 each contribute to the Ca(2+) site. Mn(2+) contacts are provided by glutamate 210, alanine 214, and aspartate 216. Lysine 279 contributes to the ATP binding site. Residue serine 313 participates in pyridoxal 5'-phosphate binding. Asparagine 316 is a binding site for ATP.

The protein belongs to the serine/threonine dehydratase family. In terms of assembly, homodimer. Requires Mg(2+) as cofactor. It depends on Mn(2+) as a cofactor. Ca(2+) serves as cofactor. The cofactor is pyridoxal 5'-phosphate. S-nitrosylated, leading to decrease the enzyme activity. As to expression, expressed in the hippocampus (at protein level). Expressed in the small intestine.

The enzyme catalyses L-serine = D-serine. The catalysed reaction is D-serine = pyruvate + NH4(+). It catalyses the reaction L-serine = pyruvate + NH4(+). Its activity is regulated as follows. Allosterically activated by magnesium, and possibly also other divalent metal cations. Allosterically activated by ATP, ADP or GTP. Functionally, catalyzes the synthesis of D-serine from L-serine. D-serine is a key coagonist with glutamate at NMDA receptors. Has dehydratase activity towards both L-serine and D-serine. In Mus musculus (Mouse), this protein is Serine racemase (Srr).